The following is a 179-amino-acid chain: Translation initiation factor IF-3 (179 aa).

Belongs to the IF-3 family. Monomer.

It localises to the cytoplasm. Functionally, IF-3 binds to the 30S ribosomal subunit and shifts the equilibrium between 70S ribosomes and their 50S and 30S subunits in favor of the free subunits, thus enhancing the availability of 30S subunits on which protein synthesis initiation begins. The chain is Translation initiation factor IF-3 from Leptospira interrogans serogroup Icterohaemorrhagiae serovar copenhageni (strain Fiocruz L1-130).